The sequence spans 437 residues: MERWQNIHKVVVVGLGITGLSVVKHLTKTQPQLTVKVIDTRATPPGTERLPEQVELHSGGWNTEWLAEADLVVTNPGIALATPEIQEVLAKGAPVVGDIELFAWAVDKPVIAITGSNGKSTVTDLTGVMAKAAGLTVGVGGNIGVPALDLLEQDADLYVLELSSFQLESTLSLKLKAAAFLNLSEDHMDRYEGMSDYRQAKLRIFDNAELAVVNRDDQETFPDTETPLVTFGSDEQAYGLEADGNRTWLLDHGQRVIASDELKLVGKHNLANALVVLALLKAADVDYHKSLNALKTYTGLTHRCQVVADNRGVKWVNDSKATNIASTIAALSGLESTGKLYLLVGGVGKGADFTPLKPIFATLNLQLCCFGADGDEFMPLHESATRFDTMEDVIQQISSQLKTGDMVMLSPACASFDQFDNFMARGDAFAALAEKYA.

115–121 (GSNGKST) contacts ATP.

It belongs to the MurCDEF family.

The protein localises to the cytoplasm. The enzyme catalyses UDP-N-acetyl-alpha-D-muramoyl-L-alanine + D-glutamate + ATP = UDP-N-acetyl-alpha-D-muramoyl-L-alanyl-D-glutamate + ADP + phosphate + H(+). It participates in cell wall biogenesis; peptidoglycan biosynthesis. Its function is as follows. Cell wall formation. Catalyzes the addition of glutamate to the nucleotide precursor UDP-N-acetylmuramoyl-L-alanine (UMA). The chain is UDP-N-acetylmuramoylalanine--D-glutamate ligase from Vibrio campbellii (strain ATCC BAA-1116).